A 259-amino-acid polypeptide reads, in one-letter code: Heat-labile enterotoxin IIA, A chain (259 aa).

The N-terminal stretch at 1–18 (MIKHVLLFFVFISFSVSA) is a signal peptide. Position 23–37 (23–37 (RADSRTPDEIRRAGG)) interacts with NAD(+). Glutamate 128 is a catalytic residue. Cysteine 203 and cysteine 215 are joined by a disulfide.

It belongs to the enterotoxin A family. In terms of assembly, heterohexamer of one A chain and of five B chains.

Its function is as follows. The biological activity of the toxin is produced by the A chain, which activates intracellular adenyl cyclase. This Escherichia coli protein is Heat-labile enterotoxin IIA, A chain.